Here is a 251-residue protein sequence, read N- to C-terminus: Triosephosphate isomerase (251 aa).

12 to 14 is a binding site for substrate; that stretch reads NWK. H99 acts as the Electrophile in catalysis. E169 functions as the Proton acceptor in the catalytic mechanism. Residues G175, S214, and 235 to 236 contribute to the substrate site; that span reads GG.

This sequence belongs to the triosephosphate isomerase family. In terms of assembly, homodimer.

Its subcellular location is the cytoplasm. The catalysed reaction is D-glyceraldehyde 3-phosphate = dihydroxyacetone phosphate. Its pathway is carbohydrate biosynthesis; gluconeogenesis. It participates in carbohydrate degradation; glycolysis; D-glyceraldehyde 3-phosphate from glycerone phosphate: step 1/1. Functionally, involved in the gluconeogenesis. Catalyzes stereospecifically the conversion of dihydroxyacetone phosphate (DHAP) to D-glyceraldehyde-3-phosphate (G3P). This Bradyrhizobium sp. (strain ORS 278) protein is Triosephosphate isomerase.